The following is a 417-amino-acid chain: Gamma-glutamyl phosphate reductase (417 aa).

Belongs to the gamma-glutamyl phosphate reductase family.

It localises to the cytoplasm. The catalysed reaction is L-glutamate 5-semialdehyde + phosphate + NADP(+) = L-glutamyl 5-phosphate + NADPH + H(+). It participates in amino-acid biosynthesis; L-proline biosynthesis; L-glutamate 5-semialdehyde from L-glutamate: step 2/2. In terms of biological role, catalyzes the NADPH-dependent reduction of L-glutamate 5-phosphate into L-glutamate 5-semialdehyde and phosphate. The product spontaneously undergoes cyclization to form 1-pyrroline-5-carboxylate. This is Gamma-glutamyl phosphate reductase from Sodalis glossinidius (strain morsitans).